The following is a 331-amino-acid chain: 6-phosphogluconolactonase (331 aa).

It belongs to the cycloisomerase 2 family.

The enzyme catalyses 6-phospho-D-glucono-1,5-lactone + H2O = 6-phospho-D-gluconate + H(+). It functions in the pathway carbohydrate degradation; pentose phosphate pathway; D-ribulose 5-phosphate from D-glucose 6-phosphate (oxidative stage): step 2/3. Functionally, catalyzes the hydrolysis of 6-phosphogluconolactone to 6-phosphogluconate. In Salmonella typhi, this protein is 6-phosphogluconolactonase.